The primary structure comprises 119 residues: Ribonuclease P protein component (119 aa).

It belongs to the RnpA family. As to quaternary structure, consists of a catalytic RNA component (M1 or rnpB) and a protein subunit.

It carries out the reaction Endonucleolytic cleavage of RNA, removing 5'-extranucleotides from tRNA precursor.. Its function is as follows. RNaseP catalyzes the removal of the 5'-leader sequence from pre-tRNA to produce the mature 5'-terminus. It can also cleave other RNA substrates such as 4.5S RNA. The protein component plays an auxiliary but essential role in vivo by binding to the 5'-leader sequence and broadening the substrate specificity of the ribozyme. The sequence is that of Ribonuclease P protein component from Streptococcus pyogenes serotype M12 (strain MGAS2096).